The sequence spans 276 residues: Dermonecrotic toxin LdSicTox-alphaIB2 (276 aa).

H5 is a catalytic residue. E25 and D27 together coordinate Mg(2+). The Nucleophile role is filled by H41. Intrachain disulfides connect C45–C51 and C47–C190. D85 contacts Mg(2+). Residue N253 is glycosylated (N-linked (GlcNAc...) asparagine).

It belongs to the arthropod phospholipase D family. Class II subfamily. It depends on Mg(2+) as a cofactor. As to expression, expressed by the venom gland.

The protein resides in the secreted. It catalyses the reaction an N-(acyl)-sphingosylphosphocholine = an N-(acyl)-sphingosyl-1,3-cyclic phosphate + choline. It carries out the reaction an N-(acyl)-sphingosylphosphoethanolamine = an N-(acyl)-sphingosyl-1,3-cyclic phosphate + ethanolamine. The enzyme catalyses a 1-acyl-sn-glycero-3-phosphocholine = a 1-acyl-sn-glycero-2,3-cyclic phosphate + choline. The catalysed reaction is a 1-acyl-sn-glycero-3-phosphoethanolamine = a 1-acyl-sn-glycero-2,3-cyclic phosphate + ethanolamine. Functionally, dermonecrotic toxins cleave the phosphodiester linkage between the phosphate and headgroup of certain phospholipids (sphingolipid and lysolipid substrates), forming an alcohol (often choline) and a cyclic phosphate. This toxin acts on sphingomyelin (SM). It may also act on ceramide phosphoethanolamine (CPE), lysophosphatidylcholine (LPC) and lysophosphatidylethanolamine (LPE), but not on lysophosphatidylserine (LPS), and lysophosphatidylglycerol (LPG). It acts by transphosphatidylation, releasing exclusively cyclic phosphate products as second products. Induces dermonecrosis, hemolysis, increased vascular permeability, edema, inflammatory response, and platelet aggregation. The sequence is that of Dermonecrotic toxin LdSicTox-alphaIB2 from Loxosceles deserta (Desert recluse spider).